Here is a 271-residue protein sequence, read N- to C-terminus: Hydroxyethylthiazole kinase (271 aa).

Met-45 contacts substrate. Positions 121 and 168 each coordinate ATP. Gly-195 is a substrate binding site.

Belongs to the Thz kinase family. The cofactor is Mg(2+).

It catalyses the reaction 5-(2-hydroxyethyl)-4-methylthiazole + ATP = 4-methyl-5-(2-phosphooxyethyl)-thiazole + ADP + H(+). The protein operates within cofactor biosynthesis; thiamine diphosphate biosynthesis; 4-methyl-5-(2-phosphoethyl)-thiazole from 5-(2-hydroxyethyl)-4-methylthiazole: step 1/1. Catalyzes the phosphorylation of the hydroxyl group of 4-methyl-5-beta-hydroxyethylthiazole (THZ). The protein is Hydroxyethylthiazole kinase of Bacillus pumilus (strain SAFR-032).